The following is a 387-amino-acid chain: Early growth response protein 3 (387 aa).

The tract at residues 241–283 is disordered; it reads PGFGSLPQPPLTLKPIRPRKYPNRPSKTPLHERPHACPAEGCD. The span at 269-283 shows a compositional bias: basic and acidic residues; the sequence is PLHERPHACPAEGCD. 3 C2H2-type zinc fingers span residues 275-299, 305-327, and 333-355; these read HACP…LRIH, FQCR…IRTH, and FACE…AKIH. Residues 348–387 form a disordered region; sequence RKRHAKIHLKQKEKKSEKGGAPSASSAPTVSLAPVVTTCA. Basic residues predominate over residues 350–360; the sequence is RHAKIHLKQKE.

The protein belongs to the EGR C2H2-type zinc-finger protein family.

The protein resides in the nucleus. Probable transcription factor involved in muscle spindle development. This is Early growth response protein 3 (Egr3) from Mus musculus (Mouse).